The chain runs to 650 residues: FAS-associated factor 1 (650 aa).

In terms of domain architecture, UBA spans Met1 to Gly57. Residues Pro62 to Val87 are disordered. Over residues Pro68–Ala83 the composition is skewed to low complexity. Ser320 carries the post-translational modification Phosphoserine. The region spanning Asn569–Leu646 is the UBX domain. Thr580 carries the phosphothreonine modification. Ser582 carries the phosphoserine modification.

As to quaternary structure, interacts with CDT1 and ATPase VCP/p97. Interacts (via UBA domain) with FAS (via death domain). Interacts (via UBA domain) with NLRP12 (via DAPIN/PYRIN domain). In terms of tissue distribution, most abundant in testis, slightly less abundant in skeletal muscle and heart, followed by prostate, thymus, ovary, small intestine, and colon. Not detected in the peripheral blood leukocytes.

The protein resides in the nucleus. Ubiquitin-binding protein. Required for the progression of DNA replication forks by targeting DNA replication licensing factor CDT1 for degradation. Potentiates but cannot initiate FAS-induced apoptosis. The chain is FAS-associated factor 1 (FAF1) from Homo sapiens (Human).